Reading from the N-terminus, the 334-residue chain is GTP 3',8-cyclase (334 aa).

The 226-residue stretch at 11–236 (GFNRKIDYLR…ESTESSMGPA (226 aa)) folds into the Radical SAM core domain. R20 is a GTP binding site. [4Fe-4S] cluster is bound by residues C27 and C31. Y33 lines the S-adenosyl-L-methionine pocket. [4Fe-4S] cluster is bound at residue C34. R69 contributes to the GTP binding site. G73 lines the S-adenosyl-L-methionine pocket. A GTP-binding site is contributed by T100. S124 is a binding site for S-adenosyl-L-methionine. A GTP-binding site is contributed by K161. Residue M195 coordinates S-adenosyl-L-methionine. [4Fe-4S] cluster-binding residues include C260 and C263. 265–267 (RVR) is a binding site for GTP. C277 contacts [4Fe-4S] cluster.

It belongs to the radical SAM superfamily. MoaA family. In terms of assembly, monomer and homodimer. [4Fe-4S] cluster is required as a cofactor.

It catalyses the reaction GTP + AH2 + S-adenosyl-L-methionine = (8S)-3',8-cyclo-7,8-dihydroguanosine 5'-triphosphate + 5'-deoxyadenosine + L-methionine + A + H(+). It participates in cofactor biosynthesis; molybdopterin biosynthesis. Its function is as follows. Catalyzes the cyclization of GTP to (8S)-3',8-cyclo-7,8-dihydroguanosine 5'-triphosphate. In Pseudomonas putida (strain ATCC 700007 / DSM 6899 / JCM 31910 / BCRC 17059 / LMG 24140 / F1), this protein is GTP 3',8-cyclase.